An 817-amino-acid polypeptide reads, in one-letter code: Lon protease (817 aa).

In terms of domain architecture, Lon N-terminal spans 44–239; sequence LPILPLRNTV…ETLRYMNVEL (196 aa). 390 to 397 serves as a coordination point for ATP; the sequence is GPPGVGKT. In terms of domain architecture, Lon proteolytic spans 626–807; it reads NDVAGVVTGL…SEVLAIALTD (182 aa). Residues Ser-713 and Lys-756 contribute to the active site.

This sequence belongs to the peptidase S16 family. In terms of assembly, homohexamer. Organized in a ring with a central cavity.

It localises to the cytoplasm. It catalyses the reaction Hydrolysis of proteins in presence of ATP.. In terms of biological role, ATP-dependent serine protease that mediates the selective degradation of mutant and abnormal proteins as well as certain short-lived regulatory proteins. Required for cellular homeostasis and for survival from DNA damage and developmental changes induced by stress. Degrades polypeptides processively to yield small peptide fragments that are 5 to 10 amino acids long. Binds to DNA in a double-stranded, site-specific manner. This Flavobacterium johnsoniae (strain ATCC 17061 / DSM 2064 / JCM 8514 / BCRC 14874 / CCUG 350202 / NBRC 14942 / NCIMB 11054 / UW101) (Cytophaga johnsonae) protein is Lon protease.